A 317-amino-acid polypeptide reads, in one-letter code: Methionyl-tRNA formyltransferase (317 aa).

109–112 (SLLP) serves as a coordination point for (6S)-5,6,7,8-tetrahydrofolate.

It belongs to the Fmt family.

It carries out the reaction L-methionyl-tRNA(fMet) + (6R)-10-formyltetrahydrofolate = N-formyl-L-methionyl-tRNA(fMet) + (6S)-5,6,7,8-tetrahydrofolate + H(+). In terms of biological role, attaches a formyl group to the free amino group of methionyl-tRNA(fMet). The formyl group appears to play a dual role in the initiator identity of N-formylmethionyl-tRNA by promoting its recognition by IF2 and preventing the misappropriation of this tRNA by the elongation apparatus. The sequence is that of Methionyl-tRNA formyltransferase from Halalkalibacterium halodurans (strain ATCC BAA-125 / DSM 18197 / FERM 7344 / JCM 9153 / C-125) (Bacillus halodurans).